The primary structure comprises 235 residues: tRNA (guanine-N(1)-)-methyltransferase (235 aa).

Residues glycine 114 and 134–139 (VGDYIL) each bind S-adenosyl-L-methionine.

This sequence belongs to the RNA methyltransferase TrmD family. As to quaternary structure, homodimer.

The protein localises to the cytoplasm. The catalysed reaction is guanosine(37) in tRNA + S-adenosyl-L-methionine = N(1)-methylguanosine(37) in tRNA + S-adenosyl-L-homocysteine + H(+). Its function is as follows. Specifically methylates guanosine-37 in various tRNAs. The polypeptide is tRNA (guanine-N(1)-)-methyltransferase (Chelativorans sp. (strain BNC1)).